The following is a 179-amino-acid chain: Translation initiation factor IF-3 (179 aa).

Belongs to the IF-3 family. In terms of assembly, monomer.

It is found in the cytoplasm. Functionally, IF-3 binds to the 30S ribosomal subunit and shifts the equilibrium between 70S ribosomes and their 50S and 30S subunits in favor of the free subunits, thus enhancing the availability of 30S subunits on which protein synthesis initiation begins. In Proteus hauseri, this protein is Translation initiation factor IF-3.